A 410-amino-acid polypeptide reads, in one-letter code: Chorismate synthase (410 aa).

NADP(+)-binding residues include Arg43 and Arg49. Residues 143 to 145 (RSS), 264 to 265 (QA), Gly308, 323 to 327 (KPIST), and Arg349 contribute to the FMN site.

This sequence belongs to the chorismate synthase family. Homotetramer. It depends on FMNH2 as a cofactor.

The catalysed reaction is 5-O-(1-carboxyvinyl)-3-phosphoshikimate = chorismate + phosphate. The protein operates within metabolic intermediate biosynthesis; chorismate biosynthesis; chorismate from D-erythrose 4-phosphate and phosphoenolpyruvate: step 7/7. Catalyzes the anti-1,4-elimination of the C-3 phosphate and the C-6 proR hydrogen from 5-enolpyruvylshikimate-3-phosphate (EPSP) to yield chorismate, which is the branch point compound that serves as the starting substrate for the three terminal pathways of aromatic amino acid biosynthesis. This reaction introduces a second double bond into the aromatic ring system. The polypeptide is Chorismate synthase (Corynebacterium glutamicum (strain ATCC 13032 / DSM 20300 / JCM 1318 / BCRC 11384 / CCUG 27702 / LMG 3730 / NBRC 12168 / NCIMB 10025 / NRRL B-2784 / 534)).